Reading from the N-terminus, the 60-residue chain is Potassium channel toxin Tst-beta-KTx (60 aa).

In terms of domain architecture, BetaSPN-type CS-alpha/beta spans 26 to 60 (QFGCPAYEGYCNDHCNDIERKDGECHGFKCKCAKD). Disulfide bonds link Cys29–Cys50, Cys36–Cys55, and Cys40–Cys57.

Belongs to the long chain scorpion toxin family. Class 1 subfamily. In terms of tissue distribution, expressed by the venom gland.

It is found in the secreted. Its function is as follows. Inhibits voltage-gated potassium channels Kv1.1/KCNA1, Kv1.2/KCNA2, and Kv1.3/KCNA3. Functionally, does not induce hemolytic activity, lactate dehydrogenase (LDH) release from mast cells, mast cell degranulation, and antimicrobial effects. In vivo, injection into mice causes moderate edema formation, but induces very weak or no change in nociceptive sensibility. It also reduces mice locomotion, suggesting an increase in anxiety, but causes no alteration in rearing (standing on hind limbs). The chain is Potassium channel toxin Tst-beta-KTx from Tityus stigmurus (Brazilian scorpion).